Here is a 199-residue protein sequence, read N- to C-terminus: N-(5'-phosphoribosyl)anthranilate isomerase (199 aa).

Belongs to the TrpF family.

The enzyme catalyses N-(5-phospho-beta-D-ribosyl)anthranilate = 1-(2-carboxyphenylamino)-1-deoxy-D-ribulose 5-phosphate. It functions in the pathway amino-acid biosynthesis; L-tryptophan biosynthesis; L-tryptophan from chorismate: step 3/5. This is N-(5'-phosphoribosyl)anthranilate isomerase from Solibacter usitatus (strain Ellin6076).